The following is a 127-amino-acid chain: MSAAGARGLRATYHRLLDKVELMLPEKLRPLYNHPAGPRTVFFWAPIMKRGLVCAGLADMARPAEKLSTAQSAVLMATGFIWSRYSLVIIPKNWSLFAVNFFVGAAGASQLFRIWRYNQELKAKAHK.

Over 2-40 the chain is Mitochondrial matrix; the sequence is SAAGARGLRATYHRLLDKVELMLPEKLRPLYNHPAGPRT. The chain crosses the membrane as a helical span at residues 41-61; sequence VFFWAPIMKRGLVCAGLADMA. The Mitochondrial intermembrane portion of the chain corresponds to 62–72; it reads RPAEKLSTAQS. Residues 73–90 traverse the membrane as a helical segment; it reads AVLMATGFIWSRYSLVII. Topologically, residues 91-95 are mitochondrial matrix; that stretch reads PKNWS. A helical membrane pass occupies residues 96-115; that stretch reads LFAVNFFVGAAGASQLFRIW. The Mitochondrial intermembrane portion of the chain corresponds to 116 to 127; that stretch reads RYNQELKAKAHK.

This sequence belongs to the mitochondrial pyruvate carrier (MPC) (TC 2.A.105) family. Homodimer. Homooligomer. Forms heterodimers with MPC1 and MPC1L. The heterodimer is the more stable and dominant form.

The protein localises to the mitochondrion inner membrane. The catalysed reaction is pyruvate(out) + H(+)(out) = pyruvate(in) + H(+)(in). Mediates the uptake of pyruvate into mitochondria. The sequence is that of Mitochondrial pyruvate carrier 2 (MPC2) from Pongo abelii (Sumatran orangutan).